Reading from the N-terminus, the 489-residue chain is MTTTEQRLTVESRNGIDYKVADLSLAEFGRKEIRLAEHEMPGLMALRREYAEVAPLKGARISGSLHMTVQTAVLIETLVSLGAEVRWASCNIFSTQDHAAAAVVVGPHGTPEEPKGTPVFAWKGETLEEYWWAAEQMLTWPGEPANMILDDGGDATMLVLRGAQFEKAGVVPPAEDDDSAEYKVFLNLLRERFETDKTKWTKIAESVKGVTEETTTGVLRLYQFEAAGELPFPAINVNDSVTKSKFDNKYGTRHSLIDGINRGTDVLIGGKKVLICGYGDVGKGCAESLAGQGARVQVTEIDPINALQALMDGFDVVTVEQAIGSADIVITSTGNKDIITLDHMKAMKDKAILGNIGHFDNEIDMAALERSGATRINIKPQVDEWTFDDGHSIVVLSEGRLLNLGNATGHPSFVMSNSFSNQVIAQIELWTKNDEYDNAVYRLAKHLDEKVARIHVEALGGTLTKLTKEQAEYINVDVEGPYKPEHYRY.

3 residues coordinate substrate: Thr68, Asp151, and Glu213. 214–216 (TTT) lines the NAD(+) pocket. Residues Lys243 and Asp247 each coordinate substrate. Residues Asn248, 277-282 (GYGDVG), Glu300, Asn335, 356-358 (IGH), and Asn403 contribute to the NAD(+) site.

It belongs to the adenosylhomocysteinase family. Requires NAD(+) as cofactor.

Its subcellular location is the cytoplasm. It carries out the reaction S-adenosyl-L-homocysteine + H2O = L-homocysteine + adenosine. Its pathway is amino-acid biosynthesis; L-homocysteine biosynthesis; L-homocysteine from S-adenosyl-L-homocysteine: step 1/1. Functionally, may play a key role in the regulation of the intracellular concentration of adenosylhomocysteine. The chain is Adenosylhomocysteinase from Mycobacterium sp. (strain JLS).